Consider the following 284-residue polypeptide: Polyamine aminopropyltransferase (284 aa).

Residues 2-237 (ELWYTEKHTE…GHWLFGFASK (236 aa)) form the PABS domain. Gln31 is a binding site for S-methyl-5'-thioadenosine. Residues His62 and Asp86 each coordinate spermidine. Residues Glu106 and 137-138 (DG) each bind S-methyl-5'-thioadenosine. The active-site Proton acceptor is Asp155. 155–158 (DSTD) serves as a coordination point for spermidine. Pro162 is an S-methyl-5'-thioadenosine binding site.

Belongs to the spermidine/spermine synthase family. Homodimer or homotetramer.

It localises to the cytoplasm. It catalyses the reaction S-adenosyl 3-(methylsulfanyl)propylamine + putrescine = S-methyl-5'-thioadenosine + spermidine + H(+). Its pathway is amine and polyamine biosynthesis; spermidine biosynthesis; spermidine from putrescine: step 1/1. Its function is as follows. Catalyzes the irreversible transfer of a propylamine group from the amino donor S-adenosylmethioninamine (decarboxy-AdoMet) to putrescine (1,4-diaminobutane) to yield spermidine. The sequence is that of Polyamine aminopropyltransferase from Clostridium botulinum (strain Eklund 17B / Type B).